The chain runs to 691 residues: DNA-directed RNA polymerase subunit beta' (691 aa).

Zn(2+)-binding residues include C76, C78, C94, and C97. Residues D496, D498, and D500 each contribute to the Mg(2+) site.

This sequence belongs to the RNA polymerase beta' chain family. RpoC1 subfamily. The cofactor is Mg(2+). It depends on Zn(2+) as a cofactor.

Its subcellular location is the plastid. The catalysed reaction is RNA(n) + a ribonucleoside 5'-triphosphate = RNA(n+1) + diphosphate. In terms of biological role, DNA-dependent RNA polymerase catalyzes the transcription of DNA into RNA using the four ribonucleoside triphosphates as substrates. The sequence is that of DNA-directed RNA polymerase subunit beta' from Cuscuta exaltata (Tall dodder).